The chain runs to 241 residues: Adapter protein MecA (241 aa).

Residues 77-102 (KNTDEDDVADESQGDASVDSEHPDQV) are disordered. Residues 80–89 (DEDDVADESQ) are compositionally biased toward acidic residues.

This sequence belongs to the MecA family. As to quaternary structure, homodimer.

Enables the recognition and targeting of unfolded and aggregated proteins to the ClpC protease or to other proteins involved in proteolysis. This chain is Adapter protein MecA, found in Levilactobacillus brevis (strain ATCC 367 / BCRC 12310 / CIP 105137 / JCM 1170 / LMG 11437 / NCIMB 947 / NCTC 947) (Lactobacillus brevis).